The chain runs to 317 residues: MATH domain and coiled-coil domain-containing protein At3g58240 (317 aa).

In terms of domain architecture, MATH spans 6-131 (DNKFTWVIKN…DGEVEIVAQI (126 aa)). Residues 254–305 (KLDWLEKKLDEVKEIKKKCERVTEMEKELHDLMNKHTNVSKLLEKEKLEIKN) adopt a coiled-coil conformation.

The sequence is that of MATH domain and coiled-coil domain-containing protein At3g58240 from Arabidopsis thaliana (Mouse-ear cress).